A 76-amino-acid chain; its full sequence is MAKKDVVVMQGYIIEALPNANFKVKLDNGHEILAHISGRMRKNFIKILPGDRVTVEVSVYDLNKGRIVKREKVNKD.

In terms of domain architecture, S1-like spans 1–72 (MAKKDVVVMQ…NKGRIVKREK (72 aa)).

Belongs to the IF-1 family. Component of the 30S ribosomal translation pre-initiation complex which assembles on the 30S ribosome in the order IF-2 and IF-3, IF-1 and N-formylmethionyl-tRNA(fMet); mRNA recruitment can occur at any time during PIC assembly.

It localises to the cytoplasm. In terms of biological role, one of the essential components for the initiation of protein synthesis. Stabilizes the binding of IF-2 and IF-3 on the 30S subunit to which N-formylmethionyl-tRNA(fMet) subsequently binds. Helps modulate mRNA selection, yielding the 30S pre-initiation complex (PIC). Upon addition of the 50S ribosomal subunit IF-1, IF-2 and IF-3 are released leaving the mature 70S translation initiation complex. The polypeptide is Translation initiation factor IF-1 (Petrotoga mobilis (strain DSM 10674 / SJ95)).